A 311-amino-acid polypeptide reads, in one-letter code: MTKIIFMGTPDFSTTVLEMLIAEHDVIAVVTQPDRPVGRKRVMTPPPVKKVAMKYDLPVYQPEKLSGSEELEQLLQLDVDLIVTAAFGQLLPESLLALPKLGAINVHASLLPKYRGGAPIHQAIIDGEQETGITIMYMVKKLDAGNIISQQAIKIEENDNVGTMHDKLSVLGADLLKETLPSIIEGTNESVPQDDTQATFASNIRREDERISWNKPGRQVFNQIRGLSPWPVAYTTMDDTNLKIYDAELVETNKINEPGTIIETTKKAIIVATNDNEAVAIKDMQLAGKKRMLAANYLSGAQNTLVGKKLI.

Residue Ser-109–Pro-112 coordinates (6S)-5,6,7,8-tetrahydrofolate.

It belongs to the Fmt family.

It carries out the reaction L-methionyl-tRNA(fMet) + (6R)-10-formyltetrahydrofolate = N-formyl-L-methionyl-tRNA(fMet) + (6S)-5,6,7,8-tetrahydrofolate + H(+). In terms of biological role, attaches a formyl group to the free amino group of methionyl-tRNA(fMet). The formyl group appears to play a dual role in the initiator identity of N-formylmethionyl-tRNA by promoting its recognition by IF2 and preventing the misappropriation of this tRNA by the elongation apparatus. This Staphylococcus aureus (strain JH1) protein is Methionyl-tRNA formyltransferase.